The chain runs to 543 residues: MSRQSTITFQTSSRRGFSTASATTPATSRSRFSSASVTHSPAGSGGLGRISGFGSRSLYNLGGTKRVSISGCGSNFRSGFGGRASSGFGVSGGFGYGGGIGGGHGGCGFSVCPPGGIQEVTVNQSLLTPLNLQIDPNIQRVRKEEREQIKTLNNKFASFIDKVRFLEQQNKVLETKWSLLQEQGTRTVRQSLEPFFEAYITDLRRQLDSITTERGRLDAELRTMQDVVEDFKVRYEDEINKRTAAENEFVALKKDVDAAYLNKVDLEAKANSLTDEINFLQMLFEAELCQMQTRVSDTSVVLSMDNNRSLDLDSIIAEVKAQYEEIANRSRAEAESWYQTKYEELQVTAGQHGDDLRNTKQEISETNRMIQRLRAEIDNVKKQCASLQTAIADAEQRGELALKDARAKLVDLEEALQKSKQDMARLLREYQELMNIKLALDVEIATYRKLLEGEECRLSGEGVSPVNISVVTSTVSSGYGGGSSIGSGSLGLSGGSGCSFMTSGGHSLGGSSFSNSSSRGLGGSGSSFKFVSTTSSSRKSYKH.

Over residues 1-16 (MSRQSTITFQTSSRRG) the composition is skewed to polar residues. The segment at 1–48 (MSRQSTITFQTSSRRGFSTASATTPATSRSRFSSASVTHSPAGSGGLG) is disordered. The tract at residues 1-144 (MSRQSTITFQ…DPNIQRVRKE (144 aa)) is head. Low complexity predominate over residues 17 to 36 (FSTASATTPATSRSRFSSAS). The tract at residues 145–180 (EREQIKTLNNKFASFIDKVRFLEQQNKVLETKWSLL) is coil 1A. In terms of domain architecture, IF rod spans 145-458 (EREQIKTLNN…KLLEGEECRL (314 aa)). The interval 181 to 199 (QEQGTRTVRQSLEPFFEAY) is linker 1. Residues 200-292 (ITDLRRQLDS…LFEAELCQMQ (93 aa)) are coil 1B. The linker 12 stretch occupies residues 293 to 315 (TRVSDTSVVLSMDNNRSLDLDSI). The segment at 316–454 (IAEVKAQYEE…ATYRKLLEGE (139 aa)) is coil 2. The segment at 455–543 (ECRLSGEGVS…TSSSRKSYKH (89 aa)) is tail. The segment at 511–543 (SSFSNSSSRGLGGSGSSFKFVSTTSSSRKSYKH) is disordered. Residues 526–543 (SSFKFVSTTSSSRKSYKH) are compositionally biased toward low complexity.

It belongs to the intermediate filament family. In terms of assembly, heterodimer of a type I and a type II keratin. May associate with KRT17.

Functionally, plays a central role in hair and nail formation. Essential component of keratin intermediate filaments in the companion layer of the hair follicle. The chain is Keratin, type II cytoskeletal 75 (KRT75) from Bos taurus (Bovine).